The sequence spans 280 residues: Transcription factor MYB60 (280 aa).

HTH myb-type domains follow at residues 9–65 (KIGI…RPGI) and 66–116 (KRGN…KKKL). 2 DNA-binding regions (H-T-H motif) span residues 37–61 (WRSV…TNYL) and 89–112 (WASI…NTHL). An S-nitrosocysteine mark is found at C49 and C53. A compositionally biased stretch (basic and acidic residues) spans 118–127 (KSDSDERSRS). Disordered stretches follow at residues 118-149 (KSDS…TYAS) and 204-247 (EEGH…NATP). Positions 128-149 (ENIALQTSSTRNTINHRSTYAS) are enriched in polar residues.

In terms of tissue distribution, specifically expressed in guard cells. Present in seedlings, leaves, stems and flowers.

The protein resides in the nucleus. Transcription factor involved in the regulation of gene (e.g. drought-regulated and flavonoid biosynthetic genes) expression and stomatal movements leading to negative regulation of responses to drought and responses to other physiological stimuli (e.g. light). Promotes guard cell deflation in response to water deficit. Triggers root growth upon osmotic stress (e.g. mannitol containing medium). This Arabidopsis thaliana (Mouse-ear cress) protein is Transcription factor MYB60.